Reading from the N-terminus, the 464-residue chain is Anthranilate synthase component 1 (464 aa).

L-tryptophan is bound by residues Ser41 and 236–238 (PYM). 271 to 272 (GT) contributes to the chorismate binding site. Glu298 provides a ligand contact to Mg(2+). Residues Tyr386, Arg406, 420 to 422 (GAG), and Gly422 each bind chorismate. Glu435 contacts Mg(2+).

The protein belongs to the anthranilate synthase component I family. Heterotetramer consisting of two non-identical subunits: a beta subunit (TrpG) and a large alpha subunit (TrpE). It depends on Mg(2+) as a cofactor.

It carries out the reaction chorismate + L-glutamine = anthranilate + pyruvate + L-glutamate + H(+). Its pathway is amino-acid biosynthesis; L-tryptophan biosynthesis; L-tryptophan from chorismate: step 1/5. With respect to regulation, feedback inhibited by tryptophan. In terms of biological role, part of a heterotetrameric complex that catalyzes the two-step biosynthesis of anthranilate, an intermediate in the biosynthesis of L-tryptophan. In the first step, the glutamine-binding beta subunit (TrpG) of anthranilate synthase (AS) provides the glutamine amidotransferase activity which generates ammonia as a substrate that, along with chorismate, is used in the second step, catalyzed by the large alpha subunit of AS (TrpE) to produce anthranilate. In the absence of TrpG, TrpE can synthesize anthranilate directly from chorismate and high concentrations of ammonia. The chain is Anthranilate synthase component 1 (trpE) from Methanothermobacter thermautotrophicus (strain ATCC 29096 / DSM 1053 / JCM 10044 / NBRC 100330 / Delta H) (Methanobacterium thermoautotrophicum).